The sequence spans 156 residues: Transcriptional repressor NrdR (156 aa).

A zinc finger spans residues 3 to 34 (CPFCGNIDTQVKDSRPAEDHVSIRRRRFCPAC). One can recognise an ATP-cone domain in the interval 49–139 (LVVIKTSGKR…VYKNFQAADD (91 aa)).

The protein belongs to the NrdR family. It depends on Zn(2+) as a cofactor.

Functionally, negatively regulates transcription of bacterial ribonucleotide reductase nrd genes and operons by binding to NrdR-boxes. The sequence is that of Transcriptional repressor NrdR from Ruegeria pomeroyi (strain ATCC 700808 / DSM 15171 / DSS-3) (Silicibacter pomeroyi).